A 397-amino-acid polypeptide reads, in one-letter code: Phosphoribulokinase, chloroplastic (397 aa).

The transit peptide at methionine 1 to cysteine 44 directs the protein to the chloroplast. Cysteine 62 and cysteine 101 form a disulfide bridge.

Belongs to the phosphoribulokinase family.

The protein resides in the plastid. The protein localises to the chloroplast. The enzyme catalyses D-ribulose 5-phosphate + ATP = D-ribulose 1,5-bisphosphate + ADP + H(+). Its pathway is carbohydrate biosynthesis; Calvin cycle. With respect to regulation, light regulated via thioredoxin by reversible oxidation/reduction of sulfhydryl/disulfide groups. The polypeptide is Phosphoribulokinase, chloroplastic (Mesembryanthemum crystallinum (Common ice plant)).